The primary structure comprises 196 residues: Alpha-crystallin A chain (196 aa).

Met1 carries the post-translational modification N-acetylmethionine. The interval 1 to 63 (MDVTIQHPWF…RTVLDSCISE (63 aa)) is required for complex formation with BFSP1 and BFSP2. Gln6 is subject to Deamidated glutamine; partial. At Ser45 the chain carries Phosphoserine. Gln50 is modified (deamidated glutamine; partial). The sHSP domain maps to 76–185 (HAGNPENNPI…GHSERAIPVS (110 aa)). 2 positions are modified to N6-acetyllysine: Lys93 and Lys122. His123 is a Zn(2+) binding site. Asn124 is subject to Deamidated asparagine; partial. Zn(2+)-binding residues include Glu125 and His130. Residue Ser145 is modified to Phosphoserine. Gln170 carries the deamidated glutamine; partial modification. Positions 170–196 (QSGLDAGHSERAIPVSQEEKPSSAPLF) are disordered. Positions 176-190 (GHSERAIPVSQEEKP) are enriched in basic and acidic residues. Zn(2+) is bound at residue His177. Ser185 carries an O-linked (GlcNAc) serine glycan.

It belongs to the small heat shock protein (HSP20) family. In terms of assembly, heteromer composed of three CRYAA and one CRYAB subunits. Inter-subunit bridging via zinc ions enhances stability, which is crucial as there is no protein turn over in the lens. Can also form homodimers and homotetramers (dimers of dimers) which serve as the building blocks of homooligomers. Within homooligomers, the zinc-binding motif is created from residues of 3 different molecules. His-123 and Glu-125 from one molecule are ligands of the zinc ion, and His-130 and His-177 residues from additional molecules complete the site with tetrahedral coordination geometry. Part of a complex required for lens intermediate filament formation composed of BFSP1, BFSP2 and CRYAA. In terms of processing, acetylation at Lys-93 may increase chaperone activity. Undergoes age-dependent proteolytical cleavage at the C-terminus.

It is found in the cytoplasm. The protein resides in the nucleus. Its function is as follows. Contributes to the transparency and refractive index of the lens. Acts as a chaperone, preventing aggregation of various proteins under a wide range of stress conditions. Required for the correct formation of lens intermediate filaments as part of a complex composed of BFSP1, BFSP2 and CRYAA. This is Alpha-crystallin A chain (CRYAA) from Spalax ehrenbergi (Middle East blind mole rat).